Consider the following 1495-residue polypeptide: Nuclear pore complex protein NUP160 (1495 aa).

As to quaternary structure, part of the nuclear pore complex (NPC). The NPC has an eight-fold symmetrical structure comprising a central transport channel and two rings, the cytoplasmic and nuclear rings, to which eight filaments are attached. The cytoplasmic filaments have loose ends, while the nuclear filaments are joined in a distal ring, forming a nuclear basket. NPCs are highly dynamic in configuration and composition, and can be devided in 3 subcomplexes, the NUP62 subcomplex, the NUP107-160 subcomplex and the NUP93 subcomplex, containing approximately 30 different nucleoporin proteins. As to expression, expressed in roots, stems, anthers, siliques and vascular tissues of cotyledons, leaves and hypocotyls.

It localises to the nucleus membrane. The protein resides in the nucleus. The protein localises to the nuclear pore complex. Functionally, contributes to the transfer of mature mRNA from the nucleus to the cytosol. Required for both R gene-mediated and basal disease resistance. RNA export seems to play a critical role in stress responses and regulation of plant growth and development. Required for proper expression of factors associated with auxin signaling. This is Nuclear pore complex protein NUP160 from Arabidopsis thaliana (Mouse-ear cress).